The following is a 363-amino-acid chain: Trichocyst matrix protein T4-B (363 aa).

The N-terminal stretch at 1-17 (MARSLTILAIVFAVATA) is a signal peptide. The propeptide occupies 18–52 (RVTKSESPKEILAQVNKDSFGNSILSVLQLQLATG). Positions 85-119 (VAFEKIIADLEQEIAYHQTQIVALSNLRDSTTEAL) form a coiled coil. The propeptide occupies 190 to 221 (RFEKVQAKLMESKHALFKPLINALTQLASKVD). Residues 244–352 (ASLLATEERQ…EVLTQKLSAA (109 aa)) adopt a coiled-coil conformation.

It belongs to the TMP family. Two components are produced by post-translational processing from the precursor peptide.

It is found in the trichocyst. Functionally, structural protein that crystallize inside the trichocyst matrix. The polypeptide is Trichocyst matrix protein T4-B (T4B) (Paramecium tetraurelia).